Consider the following 252-residue polypeptide: Short-chain dehydrogenase anuI (252 aa).

L18, D65, N92, Y171, K175, and T206 together coordinate NADP(+). Y171 (proton acceptor) is an active-site residue. The active-site Proton donor is Y171. K175 serves as the catalytic Lowers pKa of active site Tyr.

It belongs to the short-chain dehydrogenases/reductases (SDR) family.

Functionally, highly reducing polyketide synthase; part of the gene cluster that mediates the biosynthesis of annullatin D, an alkylated aromatic polyketide with a fused dihydrobenzofuran lactone ring system that exhibits potent agonistic activities toward the cannabinoid receptors. AnuI does not seem to play a role within the pathway. The annullatin backbone 2-hydroxymethyl-3-pentylphenol is assembled from one acetyl-CoA starter unit and 5 malonyl-CoA elongation units by cooperation of the highly reducing polyketide synthase anuA, the short-chain dehydrogenase anuB and the oxidoreductase anuC, before being hydroxylated at the C-5 alkyl chain by the cytochrome P450 monooxygenase anuE to form (8S)-annullatin E. The prenyltransferase anuH subsequently installs one isoprenyl group at the benzene ring to form (8S)-annullatin J. Enzymatic or nonenzymatic dihydro-benzofuran ring formation between the prenyl and the phenolic hydroxyl groups in (8S)-annullatin J results in two diastereomers (2S,9S)-annullatin H and compound 12. The intermediate (2S,9S)-annullatin H is then converted to (2S,9S)-annullatin D by the FAD-linked oxidoreductase anuG-catalyzed five-member lactone ring formation. The isomer 12 acts as a substrate for the short-chain dehydrogenase anuF and is oxidized to (2R)-annullatin F, which is subsequently acetylated by an acetyltransferase leading to (2R)-annullatin G formation. The remaining enzymes identified within the cluster, anuD, anuI and anuJ, seem not to be involved in annullatin biosynthesis. The polypeptide is Short-chain dehydrogenase anuI (Penicillium roqueforti (strain FM164)).